Here is a 312-residue protein sequence, read N- to C-terminus: Ribosomal protein L11 methyltransferase (312 aa).

S-adenosyl-L-methionine is bound by residues threonine 164, glycine 185, aspartate 207, and asparagine 249.

This sequence belongs to the methyltransferase superfamily. PrmA family.

It is found in the cytoplasm. The enzyme catalyses L-lysyl-[protein] + 3 S-adenosyl-L-methionine = N(6),N(6),N(6)-trimethyl-L-lysyl-[protein] + 3 S-adenosyl-L-homocysteine + 3 H(+). Methylates ribosomal protein L11. The protein is Ribosomal protein L11 methyltransferase of Clostridium novyi (strain NT).